We begin with the raw amino-acid sequence, 788 residues long: LPS-assembly protein LptD (788 aa).

The first 24 residues, methionine 1–alanine 24, serve as a signal peptide directing secretion.

The protein belongs to the LptD family. In terms of assembly, component of the lipopolysaccharide transport and assembly complex. Interacts with LptE and LptA.

It localises to the cell outer membrane. Together with LptE, is involved in the assembly of lipopolysaccharide (LPS) at the surface of the outer membrane. The sequence is that of LPS-assembly protein LptD from Yersinia enterocolitica serotype O:8 / biotype 1B (strain NCTC 13174 / 8081).